The sequence spans 218 residues: Small ribosomal subunit protein uS3c (218 aa).

A KH type-2 domain is found at Ile-43–Glu-118.

Belongs to the universal ribosomal protein uS3 family. Part of the 30S ribosomal subunit.

It localises to the plastid. Its subcellular location is the chloroplast. This is Small ribosomal subunit protein uS3c (rps3) from Populus trichocarpa (Western balsam poplar).